Reading from the N-terminus, the 418-residue chain is Thyroid hormone receptor alpha-A (418 aa).

The interval 1 to 38 (MDQNLSGLDCLSEPDEKRWPDGKRKRKNSQCMGKSGMS) is disordered. A modulating region spans residues 1 to 60 (MDQNLSGLDCLSEPDEKRWPDGKRKRKNSQCMGKSGMSGDSLVSLPSAGYIPSYLDKDEP). 2 NR C4-type zinc fingers span residues 61–81 (CVVCSDKATGYHYRCITCEGC) and 99–123 (CKYDGCCIIDKITRNQCQLCRFKKC). The segment at residues 61–135 (CVVCSDKATG…VGMAMDLVLD (75 aa)) is a DNA-binding region (nuclear receptor). Positions 171–415 (EEWELIRIVT…PPLFLEVFED (245 aa)) constitute an NR LBD domain.

It belongs to the nuclear hormone receptor family. NR1 subfamily. In terms of assembly, binds to thyroid hormone receptor element (TRE) weakly as homodimers and monomers, but binds TRE with much higher affinity as heterodimers with retinoid X receptors. Can bind DNA as a heterodimer with either rxra or rxrg.

It is found in the nucleus. High affinity receptor for triiodothyronine (T3). The sequence is that of Thyroid hormone receptor alpha-A (thra-a) from Xenopus laevis (African clawed frog).